Here is a 341-residue protein sequence, read N- to C-terminus: Homeobox protein knotted-1-like 8 (341 aa).

A compositionally biased stretch (low complexity) spans 1–17; it reads MESFASLAGGGSSSTTA. Disordered stretches follow at residues 1–72, 121–148, and 187–207; these read MESF…AVQG, AAQQ…DQLD, and AESN…SDKQ. Residues 187–196 show a composition bias toward polar residues; sequence AESNCEGTGS. Residues 207-227 enclose the ELK domain; the sequence is QLKHQLLRKYGGSLGDLRQVF. The homeobox; TALE-type DNA-binding region spans 228 to 291; it reads SKRTKKGKLP…NQRKRHWKPT (64 aa).

Belongs to the TALE/KNOX homeobox family.

The protein localises to the nucleus. Its function is as follows. Probable transcription factor that may be involved in shoot formation during embryogenesis. The sequence is that of Homeobox protein knotted-1-like 8 (OSH43) from Oryza sativa subsp. japonica (Rice).